Reading from the N-terminus, the 184-residue chain is Peptide deformylase 2 (184 aa).

Residues cysteine 110 and histidine 153 each contribute to the Fe cation site. Glutamate 154 is a catalytic residue. Residue histidine 157 participates in Fe cation binding.

This sequence belongs to the polypeptide deformylase family. It depends on Fe(2+) as a cofactor.

It catalyses the reaction N-terminal N-formyl-L-methionyl-[peptide] + H2O = N-terminal L-methionyl-[peptide] + formate. In terms of biological role, removes the formyl group from the N-terminal Met of newly synthesized proteins. Requires at least a dipeptide for an efficient rate of reaction. N-terminal L-methionine is a prerequisite for activity but the enzyme has broad specificity at other positions. This Geobacillus stearothermophilus (Bacillus stearothermophilus) protein is Peptide deformylase 2.